Here is a 141-residue protein sequence, read N- to C-terminus: Large ribosomal subunit protein uL11 (141 aa).

Belongs to the universal ribosomal protein uL11 family. As to quaternary structure, part of the ribosomal stalk of the 50S ribosomal subunit. Interacts with L10 and the large rRNA to form the base of the stalk. L10 forms an elongated spine to which L12 dimers bind in a sequential fashion forming a multimeric L10(L12)X complex. Post-translationally, one or more lysine residues are methylated.

In terms of biological role, forms part of the ribosomal stalk which helps the ribosome interact with GTP-bound translation factors. In Prochlorococcus marinus (strain NATL1A), this protein is Large ribosomal subunit protein uL11.